The primary structure comprises 126 residues: Ribonuclease P protein component (126 aa).

The protein belongs to the RnpA family. In terms of assembly, consists of a catalytic RNA component (M1 or rnpB) and a protein subunit.

The enzyme catalyses Endonucleolytic cleavage of RNA, removing 5'-extranucleotides from tRNA precursor.. Its function is as follows. RNaseP catalyzes the removal of the 5'-leader sequence from pre-tRNA to produce the mature 5'-terminus. It can also cleave other RNA substrates such as 4.5S RNA. The protein component plays an auxiliary but essential role in vivo by binding to the 5'-leader sequence and broadening the substrate specificity of the ribozyme. The sequence is that of Ribonuclease P protein component from Rhodococcus erythropolis (strain PR4 / NBRC 100887).